The sequence spans 55 residues: Large ribosomal subunit protein bL33 (55 aa).

This sequence belongs to the bacterial ribosomal protein bL33 family.

This is Large ribosomal subunit protein bL33 from Rhizobium johnstonii (strain DSM 114642 / LMG 32736 / 3841) (Rhizobium leguminosarum bv. viciae).